The following is a 95-amino-acid chain: Co-chaperonin GroES (95 aa).

This sequence belongs to the GroES chaperonin family. As to quaternary structure, heptamer of 7 subunits arranged in a ring. Interacts with the chaperonin GroEL.

It is found in the cytoplasm. Its function is as follows. Together with the chaperonin GroEL, plays an essential role in assisting protein folding. The GroEL-GroES system forms a nano-cage that allows encapsulation of the non-native substrate proteins and provides a physical environment optimized to promote and accelerate protein folding. GroES binds to the apical surface of the GroEL ring, thereby capping the opening of the GroEL channel. The protein is Co-chaperonin GroES of Chlorobium phaeovibrioides (strain DSM 265 / 1930) (Prosthecochloris vibrioformis (strain DSM 265)).